The following is a 151-amino-acid chain: Internal scaffolding protein VP3 (151 aa).

Positions Val120–Pro151 are disordered. The span at Thr122–Lys137 shows a compositional bias: polar residues.

Belongs to the microvidae B protein family.

The protein localises to the host cytoplasm. In terms of biological role, participates in the assembly of the viral procapsid in the cytoplasm. Internal scaffolding protein VP3 is released from the procapsid upon genome packaging, possibly through affinity displacement by the protein VP8, or by proteolysis. In Bdellovibrio bacteriovorus (Bacteriophage phiMH2K), this protein is Internal scaffolding protein VP3.